The primary structure comprises 77 residues: Cytoplasmic envelopment protein 3 (77 aa).

Residue G2 is the site of N-myristoyl glycine; by host attachment.

Belongs to the herpesviridae cytoplasmic envelopment protein 3 family. In terms of assembly, interacts with cytoplasmic envelopment protein 2; this interaction is essential for the proper localization of each protein to the assembly complex and thus for the production of infectious virus. In terms of processing, myristoylation and palmitoylation (probably on one or more of the nearby cysteines at the N-terminus) enable membrane-binding and Golgi apparatus-specific targeting and are essential for efficient packaging. Post-translationally, phosphorylated. Phosphorylation does not seem to be required for recycling to the host Golgi apparatus. Packaging is selective for underphosphorylated forms.

Its subcellular location is the virion tegument. It is found in the virion membrane. The protein localises to the host cell membrane. The protein resides in the host Golgi apparatus membrane. Functionally, plays an important role in the cytoplasmic envelopment of tegument proteins and capsids during the assembly and egress processes. Also participates in viral entry at the fusion step probably by regulating the core fusion machinery. The sequence is that of Cytoplasmic envelopment protein 3 (U71) from Human herpesvirus 6A (strain Uganda-1102) (HHV-6 variant A).